A 52-amino-acid chain; its full sequence is Large ribosomal subunit protein bL33 (52 aa).

This sequence belongs to the bacterial ribosomal protein bL33 family.

This Helicobacter pylori (strain HPAG1) protein is Large ribosomal subunit protein bL33.